The chain runs to 972 residues: Cycloisomaltooligosaccharide glucanotransferase (972 aa).

A signal peptide spans 1-38; that stretch reads MVRFMYALRKRRLSLLLAMSLLVMCVASVVSPPPQALA. 2 consecutive CBM6 domains span residues 421–546 and 748–871; these read TRYE…LTLG and DIYE…LDLD.

This sequence belongs to the glycosyl hydrolase 66 family. In terms of assembly, monomer.

It catalyses the reaction cyclizes part of a (1-&gt;6)-alpha-D-glucan chain by formation of a (1-&gt;6)-alpha-D-glucosidic bond.. Functionally, produces cycloisomaltooligosaccharide from dextran containing 7, 8 or 9 glucose units. The enzyme is specific for (1-&gt;6)-alpha-D-glucans (dextrans) and, without activity toward (1-&gt;4)-alpha-D-glucans, such as amylose. It also has no activity on oligosaccharides, such as amylopectin and pullulan, containing (1-&gt;6)-alpha-D-glucosidic linkages at branch points. In Niallia circulans (Bacillus circulans), this protein is Cycloisomaltooligosaccharide glucanotransferase.